The following is a 178-amino-acid chain: Large ribosomal subunit protein uL5 (178 aa).

Belongs to the universal ribosomal protein uL5 family. As to quaternary structure, part of the 50S ribosomal subunit; part of the 5S rRNA/L5/L18/L25 subcomplex. Contacts the 5S rRNA and the P site tRNA. Forms a bridge to the 30S subunit in the 70S ribosome.

Its function is as follows. This is one of the proteins that bind and probably mediate the attachment of the 5S RNA into the large ribosomal subunit, where it forms part of the central protuberance. In the 70S ribosome it contacts protein S13 of the 30S subunit (bridge B1b), connecting the 2 subunits; this bridge is implicated in subunit movement. Contacts the P site tRNA; the 5S rRNA and some of its associated proteins might help stabilize positioning of ribosome-bound tRNAs. The chain is Large ribosomal subunit protein uL5 from Prochlorococcus marinus subsp. pastoris (strain CCMP1986 / NIES-2087 / MED4).